The sequence spans 285 residues: 4-hydroxybenzoate octaprenyltransferase (285 aa).

The next 9 membrane-spanning stretches (helical) occupy residues 19-39, 42-62, 82-102, 104-124, 136-156, 166-186, 210-230, 233-253, and 265-285; these read IGSL…ADGL, WHVL…GCVI, LPSG…LVVC, FLLV…GIVL, YLPQ…AYAA, WLLF…YAMV, IIGL…SQLA, GIYY…QWLI, and FLNN…SVLI.

This sequence belongs to the UbiA prenyltransferase family. Requires Mg(2+) as cofactor.

Its subcellular location is the cell inner membrane. The enzyme catalyses all-trans-octaprenyl diphosphate + 4-hydroxybenzoate = 4-hydroxy-3-(all-trans-octaprenyl)benzoate + diphosphate. Its pathway is cofactor biosynthesis; ubiquinone biosynthesis. In terms of biological role, catalyzes the prenylation of para-hydroxybenzoate (PHB) with an all-trans polyprenyl group. Mediates the second step in the final reaction sequence of ubiquinone-8 (UQ-8) biosynthesis, which is the condensation of the polyisoprenoid side chain with PHB, generating the first membrane-bound Q intermediate 3-octaprenyl-4-hydroxybenzoate. The polypeptide is 4-hydroxybenzoate octaprenyltransferase (Aliivibrio fischeri (strain ATCC 700601 / ES114) (Vibrio fischeri)).